The following is a 38-amino-acid chain: Conotoxin r7a (38 aa).

Positions 1–5 (APAKR) are excised as a propeptide. 6'-bromotryptophan is present on Trp-6. 4-carboxyglutamate occurs at positions 10 and 11. Cystine bridges form between Cys-12–Cys-26, Cys-19–Cys-30, and Cys-25–Cys-35. Trp-15 is subject to 6'-bromotryptophan. Residues Glu-20 and Glu-31 each carry the 4-carboxyglutamate modification. Trp-38 is subject to 6'-bromotryptophan.

It belongs to the conotoxin O2 superfamily. In terms of tissue distribution, expressed by the venom duct.

Its subcellular location is the secreted. In terms of biological role, induces a sleep-like state in mice. This Conus radiatus (Rayed cone) protein is Conotoxin r7a.